The chain runs to 345 residues: MLKVAINGFGRIGRNVLRAVYESGKHQQIKVVAVNELAQPEAMAHLLQYDTSHGRFGKKISHDQEHLNVHHESGEYDAIRILHLSEIELLPWRDLEVDIVLDCTGVYGSKADGLAHIEAGAKKVLFSHPGANDLDNTIIYGVNHETLKDEHRVVSNGSCTTNCIVPIIKVLDEAFGIESGTITTIHSSMNDQQVIDAYHNDLRRTRAASQSIIPVDTKLHKGIERIFPKFSNKFEAISVRVPTVNVTAMDLSVTINTNVKVNDVNQTIVNASQCTLRNIVDYTESPLVSIDFNHDPHSAIVDGTQTRVSNGQLVKMLVWCDNEWGFANRMLDTALAMKASSQVEL.

11-12 (RI) provides a ligand contact to NAD(+). Residues 158–160 (SCT), Arg204, 217–218 (TK), and Arg240 each bind substrate. The active-site Nucleophile is the Cys159. Asn322 is a binding site for NAD(+).

It belongs to the glyceraldehyde-3-phosphate dehydrogenase family. Epd subfamily. In terms of assembly, homotetramer.

Its subcellular location is the cytoplasm. It carries out the reaction D-erythrose 4-phosphate + NAD(+) + H2O = 4-phospho-D-erythronate + NADH + 2 H(+). It participates in cofactor biosynthesis; pyridoxine 5'-phosphate biosynthesis; pyridoxine 5'-phosphate from D-erythrose 4-phosphate: step 1/5. Functionally, catalyzes the NAD-dependent conversion of D-erythrose 4-phosphate to 4-phosphoerythronate. This is D-erythrose-4-phosphate dehydrogenase from Vibrio parahaemolyticus serotype O3:K6 (strain RIMD 2210633).